The sequence spans 1044 residues: Isoleucine--tRNA ligase (1044 aa).

Positions 49-59 (PYCSGRIHLGT) match the 'HIGH' region motif. A 'KMSKS' region motif is present at residues 591–595 (KMSKS). Residue Lys-594 participates in ATP binding.

This sequence belongs to the class-I aminoacyl-tRNA synthetase family. IleS type 2 subfamily. As to quaternary structure, monomer. Requires Zn(2+) as cofactor.

It localises to the cytoplasm. The enzyme catalyses tRNA(Ile) + L-isoleucine + ATP = L-isoleucyl-tRNA(Ile) + AMP + diphosphate. Its function is as follows. Catalyzes the attachment of isoleucine to tRNA(Ile). As IleRS can inadvertently accommodate and process structurally similar amino acids such as valine, to avoid such errors it has two additional distinct tRNA(Ile)-dependent editing activities. One activity is designated as 'pretransfer' editing and involves the hydrolysis of activated Val-AMP. The other activity is designated 'posttransfer' editing and involves deacylation of mischarged Val-tRNA(Ile). In Methanothermobacter thermautotrophicus (strain ATCC 29096 / DSM 1053 / JCM 10044 / NBRC 100330 / Delta H) (Methanobacterium thermoautotrophicum), this protein is Isoleucine--tRNA ligase.